We begin with the raw amino-acid sequence, 458 residues long: Argininosuccinate lyase (458 aa).

It belongs to the lyase 1 family. Argininosuccinate lyase subfamily.

Its subcellular location is the cytoplasm. The catalysed reaction is 2-(N(omega)-L-arginino)succinate = fumarate + L-arginine. The protein operates within amino-acid biosynthesis; L-arginine biosynthesis; L-arginine from L-ornithine and carbamoyl phosphate: step 3/3. The chain is Argininosuccinate lyase from Bacillus velezensis (strain DSM 23117 / BGSC 10A6 / LMG 26770 / FZB42) (Bacillus amyloliquefaciens subsp. plantarum).